The sequence spans 340 residues: Anthranilate phosphoribosyltransferase (340 aa).

5-phospho-alpha-D-ribose 1-diphosphate contacts are provided by residues Gly-78, 81–82, Thr-86, 88–91, 106–114, and Ser-118; these read GD, NIST, and KHGNRSVSS. Gly-78 provides a ligand contact to anthranilate. Ser-90 is a binding site for Mg(2+). Residue Asn-109 coordinates anthranilate. Arg-164 is an anthranilate binding site. Positions 223 and 224 each coordinate Mg(2+).

This sequence belongs to the anthranilate phosphoribosyltransferase family. As to quaternary structure, homodimer. It depends on Mg(2+) as a cofactor.

It carries out the reaction N-(5-phospho-beta-D-ribosyl)anthranilate + diphosphate = 5-phospho-alpha-D-ribose 1-diphosphate + anthranilate. The protein operates within amino-acid biosynthesis; L-tryptophan biosynthesis; L-tryptophan from chorismate: step 2/5. Its function is as follows. Catalyzes the transfer of the phosphoribosyl group of 5-phosphorylribose-1-pyrophosphate (PRPP) to anthranilate to yield N-(5'-phosphoribosyl)-anthranilate (PRA). The polypeptide is Anthranilate phosphoribosyltransferase (Bacillus pumilus (Bacillus mesentericus)).